The following is a 479-amino-acid chain: Glucagon receptor (479 aa).

A signal peptide spans 1–25 (MPPARLRHPHLLLLLLLACQPQAPA). The Extracellular segment spans residues 26-136 (AQAMDFLFQK…ELGVQREVAE (111 aa)). Intrachain disulfides connect Cys-43/Cys-67, Cys-58/Cys-100, and Cys-81/Cys-121. N-linked (GlcNAc...) asparagine glycosylation is found at Asn-46, Asn-59, Asn-74, Asn-78, and Asn-117. The helical transmembrane segment at 137-161 (MYSSFQAMYTAGYSLSLAALLLALA) threads the bilayer. Residues 162–173 (ILLGLSKLHCTR) are Cytoplasmic-facing. A helical transmembrane segment spans residues 174–198 (NYIHANLLASFVLRASSVLALDALL). Over 199–225 (KTRYSQRLGDDLSVSIWLSDEAVAGCR) the chain is Extracellular. Cys-224 and Cys-294 form a disulfide bridge. The helical transmembrane segment at 226-249 (VAAVFMQYGVVANYCWLLVEGVYL) threads the bilayer. Over 250 to 263 (HSLLRQATIPERSC) the chain is Cytoplasmic. The chain crosses the membrane as a helical span at residues 264 to 285 (FPLYLAIGWGAPMLFVIPWAVV). The Extracellular segment spans residues 286-303 (KCLFENIQCWTSNDNMGF). Residues 304–326 (WWILRFPVFLAILINFSIFIRVL) traverse the membrane as a helical segment. Over 327–350 (HVLVAKLRAHQMRCTDYKFRLARS) the chain is Cytoplasmic. A helical transmembrane segment spans residues 351 to 369 (TLTLIPLLGVHEVVFAFVT). Over 370 to 381 (DEHAQGALRSAK) the chain is Extracellular. The chain crosses the membrane as a helical span at residues 382–402 (LFFDLFLSSFQGLLVAVLYCF). At 403–479 (LNKEVQAELL…GLPGVAENPF (77 aa)) the chain is on the cytoplasmic side. Positions 426-479 (KAHRVGSHSARPPSGPPSEKLLLSTGGSSNGTSQEPSAETHLASGLPGVAENPF) are disordered. Positions 446–458 (LLLSTGGSSNGTS) are enriched in low complexity. Ser-458 is modified (phosphoserine).

The protein belongs to the G-protein coupled receptor 2 family. In terms of processing, ligand-binding promotes phosphorylation of serine residues in the C-terminal cytoplasmic domain. Phosphorylation is important for receptor endocytosis after ligand-binding.

It is found in the cell membrane. In terms of biological role, G-protein coupled receptor for glucagon that plays a central role in the regulation of blood glucose levels and glucose homeostasis. Regulates the rate of hepatic glucose production by promoting glycogen hydrolysis and gluconeogenesis. Plays an important role in mediating the responses to fasting. Ligand binding causes a conformation change that triggers signaling via guanine nucleotide-binding proteins (G proteins) and modulates the activity of down-stream effectors, such as adenylate cyclase. Promotes activation of adenylate cyclase. Besides, plays a role in signaling via a phosphatidylinositol-calcium second messenger system. The sequence is that of Glucagon receptor from Sus scrofa (Pig).